The sequence spans 274 residues: Thiamine kinase (274 aa).

The protein belongs to the thiamine kinase family.

The enzyme catalyses thiamine + ATP = thiamine phosphate + ADP + H(+). The protein operates within cofactor biosynthesis; thiamine diphosphate biosynthesis; thiamine phosphate from thiamine: step 1/1. Its function is as follows. Catalyzes the ATP-dependent phosphorylation of thiamine to thiamine phosphate. Is involved in thiamine salvage. This chain is Thiamine kinase, found in Escherichia coli (strain K12 / MC4100 / BW2952).